Reading from the N-terminus, the 268-residue chain is Myb-related protein 315 (268 aa).

HTH myb-type domains lie at 9-61 (KFGL…MNYL) and 62-116 (RPDL…KKKL). 2 consecutive DNA-binding regions (H-T-H motif) follow at residues 37–61 (WRVI…MNYL) and 89–112 (WSKI…NTHI).

Expressed in roots, stems, leaves, seed pods and flowers. Strongest expression in the stem.

Its subcellular location is the nucleus. Its function is as follows. Transcription factor. The sequence is that of Myb-related protein 315 from Antirrhinum majus (Garden snapdragon).